The sequence spans 370 residues: Sodium-dependent organic anion transporter (370 aa).

Residues 1–24 (MSADCEGNSTCPANSTEEDPPVGM) are disordered. Residues 1 to 32 (MSADCEGNSTCPANSTEEDPPVGMEGQGSLKL) are Extracellular-facing. N-linked (GlcNAc...) asparagine glycosylation is found at Asn8 and Asn14. The chain crosses the membrane as a helical span at residues 33–53 (VFTVLSAVMVGLVMFSFGCSV). Residues 54–67 (ESRKLWLHLRRPWG) are Cytoplasmic-facing. Residues 68–88 (IAVGLLCQFGLMPLTAYLLAI) traverse the membrane as a helical segment. Over 89-97 (GFGLKPFQA) the chain is Extracellular. Residues 98 to 118 (IAVLIMGSCPGGTVSNVLTFW) form a helical membrane-spanning segment. At 119 to 126 (VDGDMDLS) the chain is on the cytoplasmic side. A helical transmembrane segment spans residues 127 to 147 (ISMTTCSTVAALGMMPLCLYV). The Extracellular segment spans residues 148-159 (YTRSWTLPQSLT). The chain crosses the membrane as a helical span at residues 160 to 180 (IPYQSIGITLVSLVVPVASGI). Topologically, residues 181–195 (YVNYRWPKQATFILK) are cytoplasmic. The helical transmembrane segment at 196–216 (VGAAVGGMLLLVVAVTGVVLA) threads the bilayer. Residues 217–224 (KGWNIDVT) lie on the Extracellular side of the membrane. A helical transmembrane segment spans residues 225 to 245 (LLVISCIFPLVGHVMGFLLAF). Residues 246-265 (LTHQSWQRCRTISIETGAQN) are Cytoplasmic-facing. A helical transmembrane segment spans residues 266–283 (IQLCIAMMQLSFSAEYLV). Residue Gln284 is a topological domain, extracellular. A helical transmembrane segment spans residues 285 to 305 (LLNFALAYGLFQVLHGLLIVA). At 306-370 (AYQAYKRRQK…ELTSHVPSCE (65 aa)) the chain is on the cytoplasmic side.

It belongs to the bile acid:sodium symporter (BASS) (TC 2.A.28) family. Post-translationally, glycosylated. As to expression, highly expressed in heart, lung, spleen and adrenal gland. Moderately expressed in skeletal muscle, testis and small intestine.

It is found in the membrane. It carries out the reaction estrone 3-sulfate(out) + 2 Na(+)(out) = estrone 3-sulfate(in) + 2 Na(+)(in). The enzyme catalyses 17beta-estradiol 3-sulfate(out) + 2 Na(+)(out) = 17beta-estradiol 3-sulfate(in) + 2 Na(+)(in). The catalysed reaction is dehydroepiandrosterone 3-sulfate(out) + 2 Na(+)(out) = dehydroepiandrosterone 3-sulfate(in) + 2 Na(+)(in). It catalyses the reaction androst-5-ene-diol 3-sulfate(out) + 2 Na(+)(out) = androst-5-ene-diol 3-sulfate(in) + 2 Na(+)(in). It carries out the reaction pregnenolone sulfate(out) + 2 Na(+)(out) = pregnenolone sulfate(in) + 2 Na(+)(in). The enzyme catalyses taurolithocholate 3-sulfate(out) + 2 Na(+)(out) = taurolithocholate 3-sulfate(in) + 2 Na(+)(in). The catalysed reaction is androsterone 3alpha-sulfate(out) + 2 Na(+)(out) = androsterone 3alpha-sulfate(in) + 2 Na(+)(in). It catalyses the reaction 5alpha-dihydrotestosterone sulfate(out) + 2 Na(+)(out) = 5alpha-dihydrotestosterone sulfate(in) + 2 Na(+)(in). It carries out the reaction 17beta-estradiol 17-sulfate(out) + 2 Na(+)(out) = 17beta-estradiol 17-sulfate(in) + 2 Na(+)(in). The enzyme catalyses 17alpha-hydroxypregnenolone 3-sulfate(out) + 2 Na(+)(out) = 17alpha-hydroxypregnenolone 3-sulfate(in) + 2 Na(+)(in). The catalysed reaction is epiandrosterone 3-sulfate(out) + 2 Na(+)(out) = epiandrosterone 3-sulfate(in) + 2 Na(+)(in). It catalyses the reaction epitestosterone 17-sulfate(out) + 2 Na(+)(out) = epitestosterone 17-sulfate(in) + 2 Na(+)(in). It carries out the reaction testosterone 17-sulfate(out) + 2 Na(+)(out) = testosterone 17-sulfate(in) + 2 Na(+)(in). The enzyme catalyses 16alpha-hydroxydehydroepiandrosterone 3-sulfate(out) + 2 Na(+)(out) = 16alpha-hydroxydehydroepiandrosterone 3-sulfate(in) + 2 Na(+)(in). Transports sulfoconjugated steroid hormones from the extracellular compartment into the cytosol in a sodium-dependent manner without hydrolysis. Steroid sulfate hormones are commonly considered to be biologically inactive metabolites, that may be activated by steroid sulfatases into free steroids. May play an important role by delivering sulfoconjugated steroids to specific target cells in reproductive organs. May play a role transporting the estriol precursor 16alpha-hydroxydehydroepiandrosterone 3-sulfate (16a-OH-DHEAS) at the fetal blood vessel endothelium. Can also transport other sulfoconjugated molecules such as taurolithocholic acid-3-sulfate and sulfoconjugated pyrenes. The sequence is that of Sodium-dependent organic anion transporter (Slc10a6) from Rattus norvegicus (Rat).